A 368-amino-acid polypeptide reads, in one-letter code: Peptidoglycan-recognition protein LA (368 aa).

The Cytoplasmic segment spans residues 1–127; it reads MFEENNSPTT…KSPSRRVTRN (127 aa). Disordered stretches follow at residues 21-46 and 101-122; these read QRASPAQRLHNLTSAGSSTSSSGLPL and INSNNANGNGNANRSRDKSPSR. Composition is skewed to low complexity over residues 33 to 43 and 102 to 113; these read TSAGSSTSSSG and NSNNANGNGNAN. The helical transmembrane segment at 128–148 threads the bilayer; sequence TILLITLILLVLATGLIVLYV. Residues 149 to 368 are Extracellular-facing; that stretch reads ELNRPKPELP…MKTESWDAKQ (220 aa). A disulfide bridge links Cys-221 with Cys-227. Residues 233 to 320 enclose the N-acetylmuramoyl-L-alanine amidase domain; the sequence is TIQDSAIAEK…DVDYKLVAQN (88 aa). Asn-273 and Asn-320 each carry an N-linked (GlcNAc...) asparagine glycan.

It belongs to the N-acetylmuramoyl-L-alanine amidase 2 family. As to expression, expressed in uninduced hemocytes and mbn-2 cells.

Its subcellular location is the cell membrane. Functionally, peptidoglycan-recognition protein probably involved in innate immunity by binding to peptidoglycans (PGN) of bacteria and activating the immune response. The sequence is that of Peptidoglycan-recognition protein LA (PGRP-LA) from Drosophila melanogaster (Fruit fly).